The following is a 246-amino-acid chain: Ribonuclease 3 (246 aa).

Positions 16-144 (LLEFQKQAGL…VIGAYYIDSG (129 aa)) constitute an RNase III domain. Glu-57 lines the Mg(2+) pocket. Asp-61 is an active-site residue. Mg(2+) contacts are provided by Asp-130 and Glu-133. Residue Glu-133 is part of the active site. One can recognise a DRBM domain in the interval 171–240 (DYKSLLQELV…AKVAYENLCS (70 aa)).

It belongs to the ribonuclease III family. In terms of assembly, homodimer. It depends on Mg(2+) as a cofactor.

Its subcellular location is the cytoplasm. It catalyses the reaction Endonucleolytic cleavage to 5'-phosphomonoester.. Its function is as follows. Digests double-stranded RNA. Involved in the processing of primary rRNA transcript to yield the immediate precursors to the large and small rRNAs (23S and 16S). Processes some mRNAs, and tRNAs when they are encoded in the rRNA operon. Processes pre-crRNA and tracrRNA of type II CRISPR loci if present in the organism. The chain is Ribonuclease 3 from Treponema denticola (strain ATCC 35405 / DSM 14222 / CIP 103919 / JCM 8153 / KCTC 15104).